The sequence spans 158 residues: 2-C-methyl-D-erythritol 2,4-cyclodiphosphate synthase (158 aa).

Aspartate 9 and histidine 11 together coordinate a divalent metal cation. 4-CDP-2-C-methyl-D-erythritol 2-phosphate is bound by residues 9–11 (DVH) and 35–36 (HS). Histidine 43 is an a divalent metal cation binding site. Residues 57-59 (DIG), 62-66 (FPDTD), 133-136 (TTTE), phenylalanine 140, and arginine 143 each bind 4-CDP-2-C-methyl-D-erythritol 2-phosphate.

The protein belongs to the IspF family. In terms of assembly, homotrimer. The cofactor is a divalent metal cation.

The catalysed reaction is 4-CDP-2-C-methyl-D-erythritol 2-phosphate = 2-C-methyl-D-erythritol 2,4-cyclic diphosphate + CMP. The protein operates within isoprenoid biosynthesis; isopentenyl diphosphate biosynthesis via DXP pathway; isopentenyl diphosphate from 1-deoxy-D-xylulose 5-phosphate: step 4/6. Functionally, involved in the biosynthesis of isopentenyl diphosphate (IPP) and dimethylallyl diphosphate (DMAPP), two major building blocks of isoprenoid compounds. Catalyzes the conversion of 4-diphosphocytidyl-2-C-methyl-D-erythritol 2-phosphate (CDP-ME2P) to 2-C-methyl-D-erythritol 2,4-cyclodiphosphate (ME-CPP) with a corresponding release of cytidine 5-monophosphate (CMP). In Haemophilus influenzae (strain PittEE), this protein is 2-C-methyl-D-erythritol 2,4-cyclodiphosphate synthase.